Here is a 333-residue protein sequence, read N- to C-terminus: Phosphoribosylformylglycinamidine cyclo-ligase (333 aa).

Belongs to the AIR synthase family.

The protein localises to the cytoplasm. The catalysed reaction is 2-formamido-N(1)-(5-O-phospho-beta-D-ribosyl)acetamidine + ATP = 5-amino-1-(5-phospho-beta-D-ribosyl)imidazole + ADP + phosphate + H(+). The protein operates within purine metabolism; IMP biosynthesis via de novo pathway; 5-amino-1-(5-phospho-D-ribosyl)imidazole from N(2)-formyl-N(1)-(5-phospho-D-ribosyl)glycinamide: step 2/2. The sequence is that of Phosphoribosylformylglycinamidine cyclo-ligase from Clostridium perfringens (strain 13 / Type A).